The primary structure comprises 158 residues: Putative pre-16S rRNA nuclease (158 aa).

It belongs to the YqgF nuclease family.

Its subcellular location is the cytoplasm. Functionally, could be a nuclease involved in processing of the 5'-end of pre-16S rRNA. The sequence is that of Putative pre-16S rRNA nuclease from Hahella chejuensis (strain KCTC 2396).